The following is a 265-amino-acid chain: Uroporphyrinogen-III synthase (265 aa).

It belongs to the uroporphyrinogen-III synthase family. Monomer.

Its subcellular location is the cytoplasm. It localises to the cytosol. The enzyme catalyses hydroxymethylbilane = uroporphyrinogen III + H2O. It participates in porphyrin-containing compound metabolism; protoporphyrin-IX biosynthesis; coproporphyrinogen-III from 5-aminolevulinate: step 3/4. Catalyzes cyclization of the linear tetrapyrrole, hydroxymethylbilane, to the macrocyclic uroporphyrinogen III, the branch point for the various sub-pathways leading to the wide diversity of porphyrins. Porphyrins act as cofactors for a multitude of enzymes that perform a variety of processes within the cell such as methionine synthesis (vitamin B12) or oxygen transport (heme). The chain is Uroporphyrinogen-III synthase (Uros) from Mus musculus (Mouse).